Here is an 89-residue protein sequence, read N- to C-terminus: Small ribosomal subunit protein bS20 (89 aa).

Residues 1 to 11 are compositionally biased toward basic and acidic residues; it reads MANHKSAEKRN. The interval 1 to 30 is disordered; that stretch reads MANHKSAEKRNRQNQVARLRNKSTRTAMKN.

The protein belongs to the bacterial ribosomal protein bS20 family.

Binds directly to 16S ribosomal RNA. The polypeptide is Small ribosomal subunit protein bS20 (Desulfotalea psychrophila (strain LSv54 / DSM 12343)).